A 388-amino-acid polypeptide reads, in one-letter code: MWFGKFGGQYVPETLMEPLRELEKAYKRLKNDEEFNRQLDYYLRTWAGRPTPLYYAERLTKKVGGAKIYLKREDLLHGGAHKTNNAIGQALLAKFMGKTRLIAETGAGQHGVATAMAGALLGMKVDIYMGAEDVERQKMNVFRMKLLGANVIPVHTGSKTLKDAINEALRDWVATFEYSHYLIGSVVGPHPYPIIVRDFQSVIGREAREQILEAEGDLPDVIVACVGGGSNAMGIFYPFVKDKSVRLIGVEAGGKGIESGKHSASLNAGEIGVFHGMLSYFLQDEEGQIRTTHSIAPGLDYPGVGPEHAYLKESGRAEYVTVTDEEALRAFHELSRTEGIIPALESAHAVAYAIKLAREMSRDDVIIVNLSGRGDKDLDIVLKVSGNV.

K82 is modified (N6-(pyridoxal phosphate)lysine).

The protein belongs to the TrpB family. Tetramer of two alpha and two beta chains. The cofactor is pyridoxal 5'-phosphate.

It catalyses the reaction (1S,2R)-1-C-(indol-3-yl)glycerol 3-phosphate + L-serine = D-glyceraldehyde 3-phosphate + L-tryptophan + H2O. The protein operates within amino-acid biosynthesis; L-tryptophan biosynthesis; L-tryptophan from chorismate: step 5/5. In terms of biological role, the beta subunit is responsible for the synthesis of L-tryptophan from indole and L-serine. The sequence is that of Tryptophan synthase beta chain 1 (trpB1) from Pyrococcus abyssi (strain GE5 / Orsay).